The chain runs to 393 residues: uncharacterized protein (393 aa).

Disordered stretches follow at residues 77–118 (DSNN…SIRP) and 259–296 (INNNNNNNNNNSNNNNNNNNSNNNDNNNNINTKVDESN). The span at 79 to 92 (NNNNNNNNNNNNNN) shows a compositional bias: low complexity. A compositionally biased stretch (polar residues) spans 103-114 (IRQSLSSPQQLV). The segment covering 259–289 (INNNNNNNNNNSNNNNNNNNSNNNDNNNNIN) has biased composition (low complexity).

This is an uncharacterized protein from Dictyostelium discoideum (Social amoeba).